A 501-amino-acid polypeptide reads, in one-letter code: Acid-sensing ion channel 1A (501 aa).

Residues 1 to 54 (MKTSVMDLKVEPMDIDFDQPPPLQVFAHTSTLHGISHIFSYEKITAKCCLWVVF) lie on the Cytoplasmic side of the membrane. Residues 55–71 (FLSSLTFLMYVCIDRIQ) traverse the membrane as a helical segment. Residues 72-429 (FYLEYPHVTK…ETIEQRKAYE (358 aa)) are Extracellular-facing. 7 cysteine pairs are disulfide-bonded: Cys-98/Cys-199, Cys-177/Cys-184, Cys-294/Cys-369, Cys-312/Cys-365, Cys-316/Cys-363, Cys-325/Cys-347, and Cys-327/Cys-339. N-linked (GlcNAc...) asparagine glycosylation is present at Asn-164. An N-linked (GlcNAc...) asparagine glycan is attached at Asn-370. A discontinuously helical membrane pass occupies residues 430–460 (VAGLLGDIGGQMGLFIGASILTILELFDYLY). Positions 446–448 (GAS) match the GAS motif; ion selectivity filter motif. Topologically, residues 461 to 501 (EVMKYRLCRCSNKKHHNNNNNTDHNAVFSLDDVNCHVSKFH) are cytoplasmic.

This sequence belongs to the amiloride-sensitive sodium channel (TC 1.A.6) family. ASIC1 subfamily. As to quaternary structure, homotrimer. Heterotrimer; with other ASIC proteins producing channel with different properties. Interacts with asic1c. Expressed in central nervous system. Faintly expressed in the trunk, presumably in dorsal root ganglia.

Its subcellular location is the cell membrane. It localises to the postsynaptic cell membrane. It is found in the cell projection. The protein localises to the dendrite. The catalysed reaction is Na(+)(in) = Na(+)(out). It carries out the reaction K(+)(in) = K(+)(out). It catalyses the reaction Li(+)(in) = Li(+)(out). The enzyme catalyses Ca(2+)(in) = Ca(2+)(out). Its activity is regulated as follows. Inhibited by the diuretic drug amiloride. Forms voltage-independent, pH-gated trimeric sodium channels that act as postsynaptic excitatory receptors in the nervous system, playing a crucial role in regulating synaptic plasticity, learning, and memory. Upon extracellular pH drop this channel elicits transient, fast activating, and completely desensitizing inward currents. Displays high selectivity for sodium ions but can also permit the permeation of other cations. This chain is Acid-sensing ion channel 1A (asic1a), found in Danio rerio (Zebrafish).